Consider the following 66-residue polypeptide: UPF0370 protein CKO_00315 (66 aa).

Residues 4–24 (LAKYWWILVLVFLVGVLINVI) traverse the membrane as a helical segment. A disordered region spans residues 39–66 (KPELPPHRDFNDKWDDDDDWPKKDQPKK). Basic and acidic residues predominate over residues 42-51 (LPPHRDFNDK).

This sequence belongs to the UPF0370 family.

The protein resides in the cell membrane. The chain is UPF0370 protein CKO_00315 from Citrobacter koseri (strain ATCC BAA-895 / CDC 4225-83 / SGSC4696).